The sequence spans 1693 residues: Serine protease filzig (1693 aa).

Topologically, residues 1–47 are cytoplasmic; sequence MFKWVTPASTATLSRCTLPATTAATTTTTAMAATRTATTTTRTTRPQ. A helical; Signal-anchor for type II membrane protein transmembrane segment spans residues 48 to 68; that stretch reads LLSIALTSLIIIVASFVPTTS. Residues 69–1693 lie on the Extracellular side of the membrane; the sequence is GFRSIETNGG…PWLRSITGVK (1625 aa). Disordered regions lie at residues 170-198, 212-321, 352-465, and 477-524; these read QQSA…QQPS, QQLD…NDDF, GLQD…THPG, and STGY…TTVS. Polar residues-rich tracts occupy residues 178–198 and 212–222; these read FESY…QQPS and QQLDSSSSISP. Low complexity-rich tracts occupy residues 230-241 and 252-268; these read EPQQQEYQSESE and TSSS…SSAS. Residues 274 to 294 show a composition bias toward polar residues; the sequence is EPSQPADASNDQTTQKINKQP. Low complexity-rich tracts occupy residues 358–404, 422–431, and 488–501; these read SSES…PTQK, QQKPQQVAKP, and EPPK…PAEQ. The segment covering 502–524 has biased composition (polar residues); the sequence is SYISSSTSAKRPTTGHNSPTTVS. 2 N-linked (GlcNAc...) asparagine glycosylation sites follow: asparagine 541 and asparagine 582. 3 disordered regions span residues 615–635, 752–1007, and 1057–1090; these read QDAS…PGYG, HYNP…PPAT, and YAHR…TVLI. Polar residues predominate over residues 771–799; sequence SVSSHTTKVQEQMDETSNGYQQSETTSGY. The segment covering 836–847 has biased composition (basic residues); that stretch reads PRPKPSTKRPAV. 2 stretches are compositionally biased toward polar residues: residues 951–962 and 989–1000; these read QYDQPSAPSASY and KPISTSYVTGPS. N-linked (GlcNAc...) asparagine glycosylation is found at asparagine 1215 and asparagine 1272. Low complexity-rich tracts occupy residues 1297-1307, 1331-1353, and 1362-1376; these read PVRTATTTRPK, TTTR…TTRR, and RVSS…SSAR. The segment at 1297-1435 is disordered; it reads PVRTATTTRP…TPNLAFHSPS (139 aa). Residues 1380 to 1391 show a composition bias toward acidic residues; sequence DEIVDEEDEEDV. Residues 1449–1691 form the Peptidase S1 domain; sequence IVGGKGSTFG…YKPWLRSITG (243 aa). Residues cysteine 1480 and cysteine 1496 are joined by a disulfide bond. Catalysis depends on charge relay system residues histidine 1495 and aspartate 1544. Disulfide bonds link cysteine 1608–cysteine 1627 and cysteine 1638–cysteine 1667. The active-site Charge relay system is the serine 1642.

It belongs to the peptidase S1 family.

The protein resides in the cell membrane. Probable endopeptidase. In tracheal terminal cells, acts downstream of ich to regulate seamless tube growth and/or maintenance probably by processing lumenal matrix proteins. This is Serine protease filzig from Drosophila melanogaster (Fruit fly).